The sequence spans 367 residues: MKRSAVGSFFAGAHVAEAVSLAPLTTLRVGPVAQRVITCASTEQVVDVIRQLDAPAGGRGAGPLLIFAGGSNLVIADTLADLTAVRLANAGITIDGNLVRAEAGAVWDDVVVRAIEHGLGGLECLSGIPGSAGATPVQNVGAYGAEVSDTITRVRLLERSSGSVRWVSACELRFGYRTSVFKQADPSGSQPPAVVLEVEFKLDASGQSAPLHYGELVATLDATSGQRANPHAVREAVLALRVRKGMVLDAADHDTWSVGSFFTNPVVAPDVYRQLAKMVDGPVPHYPAQDGVKLAAGWLVERAGFGKGYPDGAAPCRLSTKHVLALTNRGAATAEDVVTLARTVRNGVLEVFGITLEPEPALVGCVL.

Residues 29 to 205 enclose the FAD-binding PCMH-type domain; that stretch reads VGPVAQRVIT…LEVEFKLDAS (177 aa). R177 is an active-site residue. Residue S260 is the Proton donor of the active site. The active site involves E359.

This sequence belongs to the MurB family. FAD serves as cofactor.

It is found in the cytoplasm. The catalysed reaction is UDP-N-acetyl-alpha-D-muramate + NADP(+) = UDP-N-acetyl-3-O-(1-carboxyvinyl)-alpha-D-glucosamine + NADPH + H(+). The protein operates within cell wall biogenesis; peptidoglycan biosynthesis. In terms of biological role, cell wall formation. The polypeptide is UDP-N-acetylenolpyruvoylglucosamine reductase (Mycobacterium leprae (strain Br4923)).